The sequence spans 135 residues: Large ribosomal subunit protein uL18c (135 aa).

Belongs to the universal ribosomal protein uL18 family. Part of the 50S ribosomal subunit; contacts the 5S rRNA.

The protein resides in the plastid. Its subcellular location is the chloroplast. In terms of biological role, binds 5S rRNA, forms part of the central protuberance of the 50S subunit. The polypeptide is Large ribosomal subunit protein uL18c (rpl18) (Phaeodactylum tricornutum (strain CCAP 1055/1)).